The sequence spans 356 residues: MLPKNFLEKIQDIEQKYAQTEEKLASLDITKDADTYKALSKDLKELSYIHELYKDYNKILKDIEDTKELLKDKDLRELAEKELENLNTKLLQKEKELINVLTPKDANDSKNVILEIRAGAGGEEAALFAADLLRMYQRYAERKGWKFNILEANKTGLGGYKEVIVSIEGKNVYSHLKYESGVHRVQRVPITESGGRIHTSTITVAVLPEADETDVVINPQDLRIETFRASGAGGQYVNTTESAVRITHIPTGISISCQDERSQLQNKLKAMRILYARLKDFYEKQKKEETDKERKEQVGTGERSEKIRTYNFSQNRVTDHRINLTLHKLQDVLDGDLDDIISSLQAKELEEKLASA.

Residue glutamine 235 is modified to N5-methylglutamine.

Belongs to the prokaryotic/mitochondrial release factor family. Post-translationally, methylated by PrmC. Methylation increases the termination efficiency of RF1.

It is found in the cytoplasm. In terms of biological role, peptide chain release factor 1 directs the termination of translation in response to the peptide chain termination codons UAG and UAA. In Hydrogenobaculum sp. (strain Y04AAS1), this protein is Peptide chain release factor 1.